A 577-amino-acid chain; its full sequence is Outer spore wall assembly protein SHE10 (577 aa).

A signal peptide spans 1 to 23; that stretch reads MGKLIKLITTLTVLVSLLQYCCE. 2 coiled-coil regions span residues 379–416 and 513–561; these read NETR…ENVE and ILRS…EEDV. Over residues 525 to 545 the composition is skewed to basic and acidic residues; sequence RERKERERKEREKAAAEEFQR. The segment at 525–577 is disordered; sequence RERKERERKEREKAAAEEFQRQQELLRQQEEEDEEDVSYTSTSTITTTTTMTL. Positions 562 to 577 are enriched in low complexity; the sequence is SYTSTSTITTTTTMTL.

It belongs to the SHE10 family. Component of the mitochondria-localized RNase mitochondrial RNA-processing (RNase MRP) composed of one single RNA encoded by the NME1 gene and at least 31 proteins. Absent in the nucleus-localized RNase MRP (NuMRP).

The protein resides in the mitochondrion. Its function is as follows. Involved in spore wall assembly. May be a component of the mitochondrial RNase MRP (MtMRP), a ribonucleoprotein endoribonuclease involved in the cleaving RNA transcripts to generate primers for DNA replication in mitochondria. The protein is Outer spore wall assembly protein SHE10 of Saccharomyces cerevisiae (strain Lalvin EC1118 / Prise de mousse) (Baker's yeast).